Reading from the N-terminus, the 345-residue chain is Protein RecA (345 aa).

Residue 65-72 (GPESSGKT) coordinates ATP. Residues 326-336 (EKFQPAEAARE) show a composition bias toward basic and acidic residues. The interval 326–345 (EKFQPAEAAREEGDDEGEDE) is disordered.

Belongs to the RecA family.

Its subcellular location is the cytoplasm. Functionally, can catalyze the hydrolysis of ATP in the presence of single-stranded DNA, the ATP-dependent uptake of single-stranded DNA by duplex DNA, and the ATP-dependent hybridization of homologous single-stranded DNAs. It interacts with LexA causing its activation and leading to its autocatalytic cleavage. This Stenotrophomonas maltophilia (strain K279a) protein is Protein RecA.